Here is a 201-residue protein sequence, read N- to C-terminus: Inosine triphosphate pyrophosphatase (201 aa).

ITP is bound at residue 13–18 (TGNAKK). Glutamate 43 serves as a coordination point for Mg(2+). Residues lysine 55, 71-72 (DT), lysine 88, 148-151 (FGWD), lysine 171, and 176-177 (HR) contribute to the ITP site.

Belongs to the HAM1 NTPase family. In terms of assembly, homodimer. The cofactor is Mg(2+). Mn(2+) is required as a cofactor.

The protein localises to the cytoplasm. The catalysed reaction is ITP + H2O = IMP + diphosphate + H(+). It catalyses the reaction dITP + H2O = dIMP + diphosphate + H(+). The enzyme catalyses XTP + H2O = XMP + diphosphate + H(+). It carries out the reaction N(6)-hydroxy-dATP + H2O = N(6)-hydroxy-dAMP + diphosphate + H(+). Pyrophosphatase that hydrolyzes the non-canonical purine nucleotides inosine triphosphate (ITP), deoxyinosine triphosphate (dITP) as well as 2'-deoxy-N-6-hydroxylaminopurine triphosphate (dHAPTP) and xanthosine 5'-triphosphate (XTP) to their respective monophosphate derivatives. The enzyme does not distinguish between the deoxy- and ribose forms. Probably excludes non-canonical purines from RNA and DNA precursor pools, thus preventing their incorporation into RNA and DNA and avoiding chromosomal lesions. In Gallus gallus (Chicken), this protein is Inosine triphosphate pyrophosphatase.